A 320-amino-acid chain; its full sequence is Porphobilinogen deaminase (320 aa).

Cysteine 241 is modified (S-(dipyrrolylmethanemethyl)cysteine).

It belongs to the HMBS family. In terms of assembly, monomer. The cofactor is dipyrromethane.

The enzyme catalyses 4 porphobilinogen + H2O = hydroxymethylbilane + 4 NH4(+). Its pathway is porphyrin-containing compound metabolism; protoporphyrin-IX biosynthesis; coproporphyrinogen-III from 5-aminolevulinate: step 2/4. In terms of biological role, tetrapolymerization of the monopyrrole PBG into the hydroxymethylbilane pre-uroporphyrinogen in several discrete steps. In Thermobifida fusca (strain YX), this protein is Porphobilinogen deaminase.